The sequence spans 754 residues: MAPNATGVLKRHRSHEKFDKKRDTKKHKHVEKTIVSNPSTDSPEESSIEAESEAMVYREPTQYQNLLVSLGSSNKVVADMNKRRQREEEGKSDTEEDEDDEDEDEEENSGSDDLSSTDGEDDKSQGDDQETLGGLTDDTQEDNDNQSEEEDPDDYETDEEVHELSTNGQSFVDASSSISAFSEHLSHKLSSEEVETLPKGKWKFKWESPAFDMPNCKWKGTSENFLDGIQSDAPYGLKPKLYNHWLQLYKKCGGKDLDSSKRRKFFSICNSYLDILHSNKKPFYHCGSDEDSSAMDAYLMHSLNHIFKTRDLVKKNESKIAKHRETSEEEILSDDGFLDQGFTRPKVLILLPLRSIAFRVVKRLIQLTPESQRVNVEHLDRFNDEFGCEEDTDDCDGEKTTSKNGNSIKQKSSKPSDWQALFGANNNDDEFMLGIKHTRKSIRLYGDFYSSDIIVASPLKLHMAIGAAEENKERDVDYLSSIEVLVIDHADIISMQNWSFLATVVDYLNRLPTKQHGTNVMRIRPLYLDGHARFYRQSIILSSYLTPEMNSLFGRHCLNYKGKMKMACEYKGVLEKVLLPVRQIYERFDAASITQVDDARLEYFTKKIFPKIKDSVQGGVMIFIHSYFEFVRLRNFLNTQNTSFCLLGDYAKNADISRAREQFFVGSRKIMLYTERAYFYKRYKIRGIKNLILYSLPERKEFYPEIMNMLEEGSHDMMSTALFSRFDMLQLERIVGSTSAKRMITSEKNMFAFC.

Disordered regions lie at residues 1 to 56 (MAPN…EAMV), 69 to 166 (SLGS…ELST), and 390 to 413 (EDTD…QKSS). Over residues 42–52 (SPEESSIEAES) the composition is skewed to acidic residues. Over residues 80–93 (MNKRRQREEEGKSD) the composition is skewed to basic and acidic residues. Composition is skewed to acidic residues over residues 94–110 (TEED…ENSG) and 138–161 (DTQE…DEEV). Over residues 402–413 (SKNGNSIKQKSS) the composition is skewed to polar residues.

This sequence belongs to the UTP25 family. As to quaternary structure, component of the ribosomal small subunit (SSU) processome composed of at least 40 protein subunits and snoRNA U3. Interacts with THAL in the nucleus. Preferentially expressed in differentiating cells in young tissues such as floral buds, ovules, embryos, secondary roots, pollen, young seedlings and vascular bundles. Observed ubiquitously.

It is found in the nucleus. Its subcellular location is the nucleolus. In terms of biological role, DEAD-box RNA helicase-like protein required for pre-18S rRNA processing, specifically at sites A0, A1, and A2. Involved in the control of rRNA expression. Required for embryo development and female gametogenesis. The sequence is that of Protein NUCLEOLAR FACTOR 1 from Arabidopsis thaliana (Mouse-ear cress).